A 322-amino-acid polypeptide reads, in one-letter code: Uridylate-specific endoribonuclease EndoU (322 aa).

Residues 25 to 45 (FVIVGLLITIGILSWHFYEYF) traverse the membrane as a helical segment. The 270-residue stretch at 53–322 (TPDDVLTLSK…LIGTVYPDSS (270 aa)) folds into the EndoU domain. Catalysis depends on residues histidine 200, histidine 215, and lysine 259.

The protein belongs to the ENDOU family. Monomer. Requires Mn(2+) as cofactor. As to expression, predominantly expressed in head.

It localises to the membrane. It catalyses the reaction a ribonucleotidyl-ribonucleotide-RNA = a 3'-end 2',3'-cyclophospho-ribonucleotide-RNA + a 5'-end dephospho-ribonucleoside-RNA. Functionally, endoribonuclease that cleaves single-stranded RNAs at uridylates and releases products that have 2'-3'-cyclic phosphate termini. Preferentially cleaves single stranded RNA at poly-U sites with CU, UC and AU sites cleaved less efficiently. May target mRNAs encoding proteins involved in lipid metabolism to regulate their expression. Regulates levels of TBPH protein, but not mRNA, by an as yet unknown mechanism. Important for neuronal development or function. The chain is Uridylate-specific endoribonuclease EndoU from Drosophila melanogaster (Fruit fly).